The following is a 471-amino-acid chain: Fructokinase-like 1, chloroplastic (471 aa).

The transit peptide at 1-38 directs the protein to the chloroplast; it reads MASLLIFPHLHHFDSSLDRREVLVVRHSQASRRFLTPK. Positions 36–85 are disordered; that stretch reads TPKASINGSGITNGAAAETTSKPSRKGRKKKQTSTVIEKDNTETDPELNP. The span at 39-57 shows a compositional bias: polar residues; it reads ASINGSGITNGAAAETTSK. Positions 58–67 are enriched in basic residues; that stretch reads PSRKGRKKKQ.

Belongs to the carbohydrate kinase PfkB family. As to quaternary structure, interacts with CITRX/TRXz. Interacts with PTAC7. Self-interacts. Binds to FLN2. Associates with the plastid-encoded RNA polymerase (PEP) complex.

Its subcellular location is the plastid. The protein resides in the chloroplast. In terms of biological role, required for proper chloroplast development, most likely through regulating plastid-encoded polymerase (PEP) dependent chloroplast transcription. Acts as a component of the transcriptionally active plastid chromosome that is required for plastid gene expression. This Arabidopsis thaliana (Mouse-ear cress) protein is Fructokinase-like 1, chloroplastic.